Consider the following 122-residue polypeptide: Large ribosomal subunit protein uL14 (122 aa).

This sequence belongs to the universal ribosomal protein uL14 family. Part of the 50S ribosomal subunit. Forms a cluster with proteins L3 and L19. In the 70S ribosome, L14 and L19 interact and together make contacts with the 16S rRNA in bridges B5 and B8.

Its function is as follows. Binds to 23S rRNA. Forms part of two intersubunit bridges in the 70S ribosome. The protein is Large ribosomal subunit protein uL14 of Kocuria rhizophila (strain ATCC 9341 / DSM 348 / NBRC 103217 / DC2201).